Reading from the N-terminus, the 392-residue chain is Heat-inducible transcription repressor HrcA (392 aa).

The protein belongs to the HrcA family.

Its function is as follows. Negative regulator of class I heat shock genes (grpE-dnaK-dnaJ and groELS operons). Prevents heat-shock induction of these operons. The chain is Heat-inducible transcription repressor HrcA from Synechococcus sp. (strain JA-3-3Ab) (Cyanobacteria bacterium Yellowstone A-Prime).